We begin with the raw amino-acid sequence, 600 residues long: Probable pectin methyltransferase QUA3 (600 aa).

The Cytoplasmic portion of the chain corresponds to 1–18 (MGHVNLPASKRGNPRQWR). A helical; Signal-anchor for type II membrane protein transmembrane segment spans residues 19-39 (LLDIVTAAFFGIVLLFFILLF). The Lumenal segment spans residues 40–600 (TPLGDSMAAS…SLWKLPSNSH (561 aa)). A glycan (N-linked (GlcNAc...) asparagine) is linked at asparagine 283.

It belongs to the methyltransferase superfamily. Highly expressed and abundant in suspension-cultured cells, but low levels in seedlings.

It localises to the golgi apparatus membrane. The protein operates within glycan metabolism; pectin biosynthesis. Its function is as follows. S-adenosyl-L-methionine (SAM)-dependent methyltransferase (MTase) which mediates the methylesterification of the pectin homogalacturonan (HG) and thus regulates cell wall biosynthesis, at least in suspension-cultured cells. The sequence is that of Probable pectin methyltransferase QUA3 from Arabidopsis thaliana (Mouse-ear cress).